The sequence spans 265 residues: 3'(2'),5'-bisphosphate nucleotidase CysQ (265 aa).

Mg(2+) is bound by residues Glu-80, Asp-99, Leu-101, Asp-102, and Asp-222. Glu-80 provides a ligand contact to substrate. Residues 101-104 (LDGT) and Asp-222 each bind substrate.

It belongs to the inositol monophosphatase superfamily. CysQ family. It depends on Mg(2+) as a cofactor.

It localises to the cell inner membrane. It carries out the reaction adenosine 3',5'-bisphosphate + H2O = AMP + phosphate. Functionally, converts adenosine-3',5'-bisphosphate (PAP) to AMP. The polypeptide is 3'(2'),5'-bisphosphate nucleotidase CysQ (Buchnera aphidicola subsp. Acyrthosiphon pisum (strain APS) (Acyrthosiphon pisum symbiotic bacterium)).